Consider the following 92-residue polypeptide: Small ribosomal subunit protein uS19 (92 aa).

This sequence belongs to the universal ribosomal protein uS19 family.

Its function is as follows. Protein S19 forms a complex with S13 that binds strongly to the 16S ribosomal RNA. In Paracidovorax citrulli (strain AAC00-1) (Acidovorax citrulli), this protein is Small ribosomal subunit protein uS19.